A 298-amino-acid polypeptide reads, in one-letter code: Inosose dehydratase (298 aa).

This sequence belongs to the IolE/MocC family. Glutathione is required as a cofactor. Co(2+) serves as cofactor. It depends on Mn(2+) as a cofactor.

It carries out the reaction scyllo-inosose = 3D-3,5/4-trihydroxycyclohexane-1,2-dione + H2O. Its pathway is polyol metabolism; myo-inositol degradation into acetyl-CoA; acetyl-CoA from myo-inositol: step 2/7. Its function is as follows. Catalyzes the dehydration of inosose (2-keto-myo-inositol, 2KMI or 2,4,6/3,5-pentahydroxycyclohexanone) to 3D-(3,5/4)-trihydroxycyclohexane-1,2-dione (D-2,3-diketo-4-deoxy-epi-inositol). The protein is Inosose dehydratase of Clostridium beijerinckii (strain ATCC 51743 / NCIMB 8052) (Clostridium acetobutylicum).